The chain runs to 144 residues: Transcriptional regulator SlyA (144 aa).

In terms of domain architecture, HTH marR-type spans 2 to 135 (ESPLGSDLAR…LIKLVAKLEH (134 aa)). Positions 49–72 (QIQLAKAIGIEQPSLVRTLDQLED) form a DNA-binding region, H-T-H motif.

This sequence belongs to the SlyA family. Homodimer.

In terms of biological role, transcription regulator that can specifically activate or repress expression of target genes. Required to activate expression of virulent genes. This chain is Transcriptional regulator SlyA, found in Salmonella choleraesuis (strain SC-B67).